We begin with the raw amino-acid sequence, 359 residues long: 4-galactosyl-N-acetylglucosaminide 3-alpha-L-fucosyltransferase 9 (359 aa).

The Cytoplasmic portion of the chain corresponds to 1 to 11 (MTSTSKGILRP). The helical; Signal-anchor for type II membrane protein transmembrane segment at 12–32 (FLIVCIILGCFMACLLIYIKP) threads the bilayer. Over 33–359 (TNSWVFSPME…VGNLEKWFWN (327 aa)) the chain is Lumenal. N-linked (GlcNAc...) asparagine glycosylation is present at Asn62. The interval 63–168 (ETTILVWVWP…RRDSDIQVPY (106 aa)) is acceptor-binding. A beta-D-galactosyl-(1-&gt;4)-N-acetyl-beta-D-glucosaminyl derivative is bound at residue Gln75. 3 cysteine pairs are disulfide-bonded: Cys82–Cys335, Cys91–Cys338, and Cys190–Cys238. Asn101 carries N-linked (GlcNAc...) asparagine glycosylation. Glu137 lines the a beta-D-galactosyl-(1-&gt;4)-N-acetyl-beta-D-glucosaminyl derivative pocket. Residue Glu137 is the Nucleophile of the active site. Position 137 (Glu137) interacts with GDP-beta-L-fucose. An N-linked (GlcNAc...) asparagine glycan is attached at Asn153. Positions 168, 192, 194, 195, 202, 226, 241, 246, 252, 255, and 256 each coordinate GDP-beta-L-fucose. Residues 169 to 326 (GFLTVSTNPF…NWRKDFTVNL (158 aa)) are donor-binding. An acceptor-binding region spans residues 327 to 359 (PRFWESHACLACDHVKRHQEYKSVGNLEKWFWN).

The protein belongs to the glycosyltransferase 10 family. Homodimer. Post-translationally, N-glycosylated with complex-type N-glycans. As to expression, mainly detected in brain and kidney.

The protein localises to the golgi apparatus. It localises to the trans-Golgi network membrane. It is found in the golgi apparatus membrane. It catalyses the reaction a beta-D-galactosyl-(1-&gt;4)-N-acetyl-beta-D-glucosaminyl derivative + GDP-beta-L-fucose = a beta-D-galactosyl-(1-&gt;4)-[alpha-L-fucosyl-(1-&gt;3)]-N-acetyl-beta-D-glucosaminyl derivative + GDP + H(+). It carries out the reaction an alpha-Neu5Ac-(2-&gt;3)-beta-D-Gal-(1-&gt;4)-beta-D-GlcNAc-(1-&gt;3)-beta-D-Gal-(1-&gt;4)-beta-D-GlcNAc derivative + GDP-beta-L-fucose = an alpha-Neu5Ac-(2-&gt;3)-beta-D-Gal-(1-&gt;4)-beta-D-GlcNAc-(1-&gt;3)-beta-D-Gal-(1-&gt;4)-[alpha-L-Fuc-(1-&gt;3)]-beta-D-GlcNAc derivative + GDP + H(+). The catalysed reaction is alpha-N-glycoloylneuraminosyl-(2-&gt;3)-beta-D-galactosyl-(1-&gt;4)-N-acetyl-beta-D-glucosaminyl-(1-&gt;3)-beta-D-galactosyl-(1-&gt;4)-N-acetyl-beta-D-glucosaminyl-(1-&gt;3)-beta-D-galactosyl-(1-&gt;4)-beta-D-glucosyl-(1&lt;-&gt;1')-ceramide + GDP-beta-L-fucose = alpha-N-glycoloylneuraminosyl-(2-&gt;3)-beta-D-galactosyl-(1-&gt;4)-N-acetyl-beta-D-glucosaminyl-(1-&gt;3)-beta-D-galactosyl-(1-&gt;4)-[alpha-L-fucosyl-(1-&gt;3)]-N-acetyl-beta-D-glucosaminyl-(1-&gt;3)-beta-D-galactosyl-(1-&gt;4)-beta-D-glucosyl-(1&lt;-&gt;1')-ceramide + GDP + H(+). The enzyme catalyses alpha-D-galactosyl-(1-&gt;3)-beta-D-galactosyl-(1-&gt;4)-N-acetyl-beta-D-glucosaminyl-(1-&gt;3)-beta-D-galactosyl-(1-&gt;4)-beta-D-glucosyl-(1&lt;-&gt;1')-ceramide + GDP-beta-L-fucose = a neolactoside IV(3)-alpha-Gal,III(3)-alpha-Fuc-nLc4Cer + GDP + H(+). It catalyses the reaction a neolactoside nLc4Cer + GDP-beta-L-fucose = a neolactoside III(3)-alpha-Fuc-nLc4Cer + GDP + H(+). It carries out the reaction an N-acetyl-alpha-neuraminyl-(2-&gt;3)-beta-D-galactosyl-(1-&gt;4)-N-acetyl-beta-D-glucosaminyl derivative + GDP-beta-L-fucose = an alpha-Neu5Ac-(2-&gt;3)-beta-D-Gal-(1-&gt;4)-[alpha-L-Fuc-(1-&gt;3)]-beta-D-GlcNAc derivative + GDP + H(+). The catalysed reaction is beta-D-Gal-(1-&gt;4)-beta-D-GlcNAc-(1-&gt;3)-beta-D-Gal-(1-&gt;4)-D-Glc + GDP-beta-L-fucose = beta-D-Gal-(1-&gt;4)-[alpha-L-Fuc-(1-&gt;3)]-beta-D-GlcNAc-(1-&gt;3)-beta-D-Gal-(1-&gt;4)-D-Glc + GDP + H(+). The enzyme catalyses an alpha-L-Fuc-(1-&gt;2)-beta-D-Gal-(1-&gt;4)-beta-D-GlcNAc derivative + GDP-beta-L-fucose = an alpha-L-Fuc-(1-&gt;2)-beta-D-Gal-(1-&gt;4)-[alpha-L-Fuc-(1-&gt;3)]-beta-D-GlcNAc derivative + GDP + H(+). It functions in the pathway protein modification; protein glycosylation. The protein operates within glycolipid biosynthesis. Activated by Mn2+. Its function is as follows. Catalyzes alpha(1-&gt;3) linkage of fucosyl moiety transferred from GDP-beta-L-fucose to N-acetyl glucosamine (GlcNAc) within type 2 lactosamine (LacNAc, beta-D-Gal-(1-&gt;4)-beta-D-GlcNAc-) glycan attached to glycolipids and N- or O-linked glycoproteins. Fucosylates distal type 2 LacNAc and its fucosylated (H-type 2 LacNAc) and sialylated (sialyl-type 2 LacNAc) derivatives to form Lewis x (Lex) (CD15) and Lewis y (Ley) antigenic epitopes involved in cell adhesion and differentiation. Generates Lex epitopes in the brain, presumably playing a role in the maintenance of neuronal stemness and neurite outgrowth in progenitor neural cells. Fucosylates the internal type 2 LacNAc unit of the polylactosamine chain to form VIM-2 antigen that serves as recognition epitope for SELE. Can also modify milk oligosaccharides in particular type 2 tetrasaccharide LNnT. This Mus musculus (Mouse) protein is 4-galactosyl-N-acetylglucosaminide 3-alpha-L-fucosyltransferase 9.